A 673-amino-acid chain; its full sequence is Zinc finger and BTB domain-containing protein 16 (673 aa).

Residues 34 to 96 (CDVVIMVDSQ…AYTATLQAKA (63 aa)) enclose the BTB domain. Phosphoserine; by PDPK1 is present on residues Ser-76, Ser-184, and Ser-197. Positions 200–300 (KAAVDSLMTI…SARELHYGRE (101 aa)) are interaction with RUNX1T1. Disordered regions lie at residues 215 to 236 (QGTLQPPAGPEEPTLAGGGRHP) and 249 to 332 (DEVP…KHLG). Position 256 is a phosphoserine; by PDPK1 (Ser-256). A Phosphothreonine; by PDPK1 modification is found at Thr-282. Composition is skewed to basic and acidic residues over residues 293-302 (RELHYGREES) and 319-331 (RPEHPAPPPEKHL). C2H2-type zinc fingers lie at residues 404–426 (EQCSVCGVELPDNEAVEQHRKLH), 432–454 (YGCELCGKRFLDSLRLRMHLLAH), 461–483 (FVCDQCGAQFSKEDALETHRQTH), 490–512 (VFCLLCGKRFQAQSALQQHMEVH), 518–540 (YICSECNRTFPSHTALKRHLRSH), 546–568 (YECEFCGSCFRDESTLKSHKRIH), 574–596 (YECNGCGKKFSLKHQLETHYRVH), and 602–624 (FECKLCHQRSRDYSAMIKHLRTH). Phosphoserine; by PDPK1 is present on Ser-628. Residues 630–652 (YQCTICTEYCPSLSSMQKHMKGH) form a C2H2-type 9 zinc finger.

Belongs to the krueppel C2H2-type zinc-finger protein family. Binds EPN1. Interacts with ZBTB32 and CUL3. Interacts with ATP7B. Interacts with transcriptional corepressor RUNX1T1 (via its N-terminus); the interaction increases the transcription repression activity of ZBTB16. Interacts (via C2H2-type zinc finger domains 1 and 2) with RNF112. As to expression, within the hematopoietic system, PLZF is expressed in bone marrow, early myeloid cell lines and peripheral blood mononuclear cells. Also expressed in the ovary, and at lower levels, in the kidney and lung.

It localises to the nucleus. The protein resides in the nuclear body. Its pathway is protein modification; protein ubiquitination. Its function is as follows. Acts as a transcriptional repressor. Transcriptional repression may be mediated through recruitment of histone deacetylases to target promoters. May play a role in myeloid maturation and in the development and/or maintenance of other differentiated tissues. Probable substrate-recognition component of an E3 ubiquitin-protein ligase complex which mediates the ubiquitination and subsequent proteasomal degradation of target proteins. The chain is Zinc finger and BTB domain-containing protein 16 (ZBTB16) from Homo sapiens (Human).